A 433-amino-acid polypeptide reads, in one-letter code: GTPase Obg (433 aa).

The 159-residue stretch at 1–159 (MAFRDVLDIE…RRVRLELRLI (159 aa)) folds into the Obg domain. The OBG-type G domain occupies 160-327 (ADVGLVGYPN…LRQALFDLLP (168 aa)). ATP is bound by residues 166 to 173 (GYPNAGKS), 191 to 195 (FTTLS), 214 to 217 (DIPG), 280 to 283 (NKIE), and 308 to 310 (SAK). S173 and T193 together coordinate Mg(2+). One can recognise an OCT domain in the interval 342–430 (PEEVREEPLT…IGSFRFEYYA (89 aa)).

Belongs to the TRAFAC class OBG-HflX-like GTPase superfamily. OBG GTPase family. Monomer. Mg(2+) serves as cofactor.

It localises to the cytoplasm. Functionally, an essential GTPase which binds GTP, GDP and possibly (p)ppGpp with moderate affinity, with high nucleotide exchange rates and a fairly low GTP hydrolysis rate. Plays a role in control of the cell cycle, stress response, ribosome biogenesis and in those bacteria that undergo differentiation, in morphogenesis control. This Deinococcus geothermalis (strain DSM 11300 / CIP 105573 / AG-3a) protein is GTPase Obg.